A 74-amino-acid chain; its full sequence is Conotoxin Vc6.11 (74 aa).

An N-terminal signal peptide occupies residues 1–19; that stretch reads MEKLTILLLVAAVLMSTQA. Positions 20–41 are excised as a propeptide; that stretch reads LIQEQRQKAKINLFSKRKPSAE. 2 disulfide bridges follow: C55–C66 and C61–C71.

This sequence belongs to the conotoxin O2 superfamily. Expressed by the venom duct.

Its subcellular location is the secreted. In terms of biological role, inhibits voltage-gated ion channels. This Conus victoriae (Queen Victoria cone) protein is Conotoxin Vc6.11.